The following is a 222-amino-acid chain: Chromatin-associated protein SWI6 (222 aa).

Basic and acidic residues predominate over residues 1 to 15; sequence MPVIKKEELSQKKDL. 2 disordered regions span residues 1 to 26 and 77 to 147; these read MPVIKKEELSQKKDLESEEEDSGLED and ETQD…DRQY. The segment covering 16-26 has biased composition (acidic residues); that stretch reads ESEEEDSGLED. The region spanning 28–87 is the Chromo domain; the sequence is YEVEKVIKHRGKGKNIEFLVRWKGYGPEYDTWEPTENVASAEEAVAAYWETQDKTATAPR.

In terms of assembly, interacts with DMT5.

Its subcellular location is the nucleus. Its function is as follows. Recognizes and binds histone H3 tails methylated at 'Lys-9', leading to epigenetic repression. Localizes DMT5 to heterochromatin characterized by trimethylation of histone H3 tails at 'Lys-9'. This Cryptococcus neoformans var. grubii serotype A (strain H99 / ATCC 208821 / CBS 10515 / FGSC 9487) (Filobasidiella neoformans var. grubii) protein is Chromatin-associated protein SWI6.